The sequence spans 312 residues: Nodulation protein D 2 (312 aa).

The region spanning 6–63 is the HTH lysR-type domain; that stretch reads LDLNLLVALDALMTKRSVTAAARSINLSQPAMSAAIARLRTYFGDDLFTMRGRELIPT. A DNA-binding region (H-T-H motif) is located at residues 23–42; that stretch reads VTAAARSINLSQPAMSAAIA.

The protein belongs to the LysR transcriptional regulatory family.

Represses the expression of the nodABCIJ-nolO-noeI operon. This chain is Nodulation protein D 2 (nodD2), found in Sinorhizobium fredii (strain NBRC 101917 / NGR234).